A 571-amino-acid polypeptide reads, in one-letter code: Translation initiation factor IF-2 (571 aa).

Positions 71–239 (RRPPVVVIMG…ILLLAELEDY (169 aa)) constitute a tr-type G domain. Positions 80-87 (GHVDHGKT) are G1. Residue 80–87 (GHVDHGKT) participates in GTP binding. The G2 stretch occupies residues 105-109 (GITQH). A G3 region spans residues 126–129 (DTPG). GTP-binding positions include 126–130 (DTPGH) and 180–183 (NKID). The interval 180-183 (NKID) is G4. The interval 216 to 218 (SAK) is G5.

This sequence belongs to the TRAFAC class translation factor GTPase superfamily. Classic translation factor GTPase family. IF-2 subfamily.

Its subcellular location is the cytoplasm. In terms of biological role, one of the essential components for the initiation of protein synthesis. Protects formylmethionyl-tRNA from spontaneous hydrolysis and promotes its binding to the 30S ribosomal subunits. Also involved in the hydrolysis of GTP during the formation of the 70S ribosomal complex. This Thermus thermophilus (strain ATCC BAA-163 / DSM 7039 / HB27) protein is Translation initiation factor IF-2.